A 268-amino-acid polypeptide reads, in one-letter code: Small ribosomal subunit protein uS2 (268 aa).

Belongs to the universal ribosomal protein uS2 family.

This Caulobacter vibrioides (strain ATCC 19089 / CIP 103742 / CB 15) (Caulobacter crescentus) protein is Small ribosomal subunit protein uS2.